Consider the following 280-residue polypeptide: Ribonuclease Z (280 aa).

The Zn(2+) site is built by His-61, His-63, Asp-65, His-66, His-153, Asp-176, and His-240. Residue Asp-65 is the Proton acceptor of the active site.

The protein belongs to the RNase Z family. As to quaternary structure, homodimer. It depends on Zn(2+) as a cofactor.

It catalyses the reaction Endonucleolytic cleavage of RNA, removing extra 3' nucleotides from tRNA precursor, generating 3' termini of tRNAs. A 3'-hydroxy group is left at the tRNA terminus and a 5'-phosphoryl group is left at the trailer molecule.. Its function is as follows. Zinc phosphodiesterase, which displays some tRNA 3'-processing endonuclease activity. Probably involved in tRNA maturation, by removing a 3'-trailer from precursor tRNA. The polypeptide is Ribonuclease Z (Mycobacterium avium (strain 104)).